The primary structure comprises 197 residues: Class A basic helix-loop-helix protein 15 (197 aa).

Residues 1–12 (MKTKNRPPRRRT) show a composition bias toward basic residues. Disordered stretches follow at residues 1–82 (MKTK…ERER) and 178–197 (QPQG…REGS). Threonine 12 and threonine 25 each carry phosphothreonine. Residues 65 to 82 (GRRENSVQRRLESNERER) are compositionally biased toward basic and acidic residues. In terms of domain architecture, bHLH spans 72–124 (QRRLESNERERQRMHKLNNAFQALREVIPHVRADKKLSKIETLTLAKNYIKSL).

Forms homodimers or heterodimers with TCF3 gene products E12 and E47. These dimers bind to the E-box site, however, heterodimer with MYOD1 does not bind target DNA. As to expression, expressed in pancreatic tissue only in acinar cells. There is a complete absence of expression in intra- or interlobular pancreatic ducts and in all islet cells.

The protein resides in the nucleus. Functionally, plays a role in controlling the transcriptional activity of MyoD, ensuring that expanding myoblast populations remain undifferentiated. Repression may occur through muscle-specific E-box occupancy by homodimers. May also negatively regulate bHLH-mediated transcription through an N-terminal repressor domain. Serves as a key regulator of acinar cell function, stability, and identity. Also required for normal organelle localization in exocrine cells and for mitochondrial calcium ion transport. May function as a unique regulator of gene expression in several different embryonic and postnatal cell lineages. Binds to the E-box consensus sequence 5'-CANNTG-3'. This Mus musculus (Mouse) protein is Class A basic helix-loop-helix protein 15 (Bhlha15).